A 138-amino-acid chain; its full sequence is NADPH-dependent 7-cyano-7-deazaguanine reductase (138 aa).

The active-site Thioimide intermediate is cysteine 53. Aspartate 60 serves as the catalytic Proton donor. Residues 75 to 77 and 94 to 95 contribute to the substrate site; these read VEL and HE.

The protein belongs to the GTP cyclohydrolase I family. QueF type 1 subfamily.

The protein localises to the cytoplasm. The catalysed reaction is 7-aminomethyl-7-carbaguanine + 2 NADP(+) = 7-cyano-7-deazaguanine + 2 NADPH + 3 H(+). The protein operates within tRNA modification; tRNA-queuosine biosynthesis. In terms of biological role, catalyzes the NADPH-dependent reduction of 7-cyano-7-deazaguanine (preQ0) to 7-aminomethyl-7-deazaguanine (preQ1). This is NADPH-dependent 7-cyano-7-deazaguanine reductase from Gloeothece citriformis (strain PCC 7424) (Cyanothece sp. (strain PCC 7424)).